The sequence spans 706 residues: Methionine--tRNA ligase (706 aa).

Positions 13-23 (PYANGNFHIGH) match the 'HIGH' region motif. Residues Cys-144, Cys-147, Cys-157, and Cys-160 each coordinate Zn(2+). The 'KMSKS' region signature appears at 341 to 345 (KMSKS). Lys-344 serves as a coordination point for ATP. Residues 600–706 (DFAKIDLRIA…PGATPGMRVR (107 aa)) form the tRNA-binding domain.

This sequence belongs to the class-I aminoacyl-tRNA synthetase family. MetG type 1 subfamily. As to quaternary structure, homodimer. Zn(2+) serves as cofactor.

It localises to the cytoplasm. The enzyme catalyses tRNA(Met) + L-methionine + ATP = L-methionyl-tRNA(Met) + AMP + diphosphate. Functionally, is required not only for elongation of protein synthesis but also for the initiation of all mRNA translation through initiator tRNA(fMet) aminoacylation. The protein is Methionine--tRNA ligase of Paracidovorax citrulli (strain AAC00-1) (Acidovorax citrulli).